Consider the following 124-residue polypeptide: uncharacterized protein (124 aa).

Residues 13 to 33 (IIFMALYFVITGIVIRLIGYS) form a helical membrane-spanning segment.

It is found in the membrane. This is an uncharacterized protein from Bacillus anthracis.